A 407-amino-acid polypeptide reads, in one-letter code: Tryptophan synthase beta chain (407 aa).

Lys98 carries the N6-(pyridoxal phosphate)lysine modification.

It belongs to the TrpB family. In terms of assembly, tetramer of two alpha and two beta chains. Pyridoxal 5'-phosphate is required as a cofactor.

It carries out the reaction (1S,2R)-1-C-(indol-3-yl)glycerol 3-phosphate + L-serine = D-glyceraldehyde 3-phosphate + L-tryptophan + H2O. It participates in amino-acid biosynthesis; L-tryptophan biosynthesis; L-tryptophan from chorismate: step 5/5. In terms of biological role, the beta subunit is responsible for the synthesis of L-tryptophan from indole and L-serine. In Bradyrhizobium sp. (strain ORS 278), this protein is Tryptophan synthase beta chain.